The chain runs to 404 residues: Glucose-1-phosphate adenylyltransferase 2 (404 aa).

Alpha-D-glucose 1-phosphate is bound by residues Y97, G162, 177–178, and S195; that span reads EK.

This sequence belongs to the bacterial/plant glucose-1-phosphate adenylyltransferase family. In terms of assembly, homotetramer.

It carries out the reaction alpha-D-glucose 1-phosphate + ATP + H(+) = ADP-alpha-D-glucose + diphosphate. The protein operates within glycan biosynthesis; glycogen biosynthesis. Its function is as follows. Involved in the biosynthesis of ADP-glucose, a building block required for the elongation reactions to produce glycogen. Catalyzes the reaction between ATP and alpha-D-glucose 1-phosphate (G1P) to produce pyrophosphate and ADP-Glc. The polypeptide is Glucose-1-phosphate adenylyltransferase 2 (Vibrio vulnificus (strain YJ016)).